The chain runs to 142 residues: Small ribosomal subunit protein uS19 (142 aa).

This sequence belongs to the universal ribosomal protein uS19 family. Component of the small ribosomal subunit. Mature ribosomes consist of a small (40S) and a large (60S) subunit. The 40S subunit contains about 32 different proteins and 1 molecule of RNA (18S). The 60S subunit contains 45 different proteins and 3 molecules of RNA (25S, 5.8S and 5S).

Its subcellular location is the cytoplasm. In terms of biological role, component of the ribosome, a large ribonucleoprotein complex responsible for the synthesis of proteins in the cell. The small ribosomal subunit (SSU) binds messenger RNAs (mRNAs) and translates the encoded message by selecting cognate aminoacyl-transfer RNA (tRNA) molecules. The large subunit (LSU) contains the ribosomal catalytic site termed the peptidyl transferase center (PTC), which catalyzes the formation of peptide bonds, thereby polymerizing the amino acids delivered by tRNAs into a polypeptide chain. The nascent polypeptides leave the ribosome through a tunnel in the LSU and interact with protein factors that function in enzymatic processing, targeting, and the membrane insertion of nascent chains at the exit of the ribosomal tunnel. RPS15 has a role in the late stage of the assembly of pre-40S particles within the nucleus and controls their export to the cytoplasm. This is Small ribosomal subunit protein uS19 (RPS15) from Candida albicans (strain SC5314 / ATCC MYA-2876) (Yeast).